The following is a 105-amino-acid chain: Large ribosomal subunit protein uL24 (105 aa).

It belongs to the universal ribosomal protein uL24 family. Part of the 50S ribosomal subunit.

One of two assembly initiator proteins, it binds directly to the 5'-end of the 23S rRNA, where it nucleates assembly of the 50S subunit. Functionally, one of the proteins that surrounds the polypeptide exit tunnel on the outside of the subunit. This Rhodospirillum centenum (strain ATCC 51521 / SW) protein is Large ribosomal subunit protein uL24.